The sequence spans 224 residues: Claudin-17 (224 aa).

The Cytoplasmic segment spans residues 1 to 7; sequence MAFYPLQ. The helical transmembrane segment at 8-28 threads the bilayer; the sequence is IAGLVLGFFGLVGTIGTTLLP. The Extracellular segment spans residues 29–81; that stretch reads QWRVSAFIGSNIIIFERIWEGLWMNCIQQAMVTLQCKFYNSILALPPVLEAAR. The chain crosses the membrane as a helical span at residues 82–102; that stretch reads ALMCVAVALALVALIIGICGM. Over 103 to 124 the chain is Cytoplasmic; it reads KQLQCTGSSERVKAYLLGTSGV. Residues 125 to 145 traverse the membrane as a helical segment; it reads LFILTGIFVLIPVSWTANIII. The Extracellular segment spans residues 146 to 164; sequence RDFYDPTVHAGQKRELGGA. A helical transmembrane segment spans residues 165–185; the sequence is LFLGWATAAVLFIGGGLLCGY. Topologically, residues 186-224 are cytoplasmic; the sequence is CCCNRKERWHRYPVPAYRVPQKDNQRNVTVPRKSSTSYV.

This sequence belongs to the claudin family. As to quaternary structure, does not form homotypic polymeric strands and it is not sufficient to form tight junctions by its own. Interacts with OCLN. Expressed at high levels in the kidney and at mucher lower levels in the brain. In the kidney, expression gradually decreases from the proximal tubule downstream to the distal convoluted tubule. Expressed in the thin ascending limb of Henle's loop, as well as in the thick ascending limb of Henle's loop. In the distal convoluted tubules, expressed only in a few tubules. Not detected in the collecting duct. In the brain, expressed in blood vessels (at protein level).

Its subcellular location is the cell junction. The protein localises to the tight junction. It is found in the cell membrane. The catalysed reaction is chloride(in) = chloride(out). It catalyses the reaction hydrogencarbonate(in) = hydrogencarbonate(out). It carries out the reaction bromide(in) = bromide(out). The enzyme catalyses iodide(out) = iodide(in). The catalysed reaction is fluoride(in) = fluoride(out). It catalyses the reaction nitrate(in) = nitrate(out). It carries out the reaction thiocyanate(in) = thiocyanate(out). In terms of biological role, channel-forming tight junction protein with selectivity for anions, including chloride and hydrogencarbonate, and for solutes smaller than 9 Angstrom in diameter. In the kidney proximal tubule, may be involved in quantitative reabsorption of filtered anions. Does not affect water permeability. The protein is Claudin-17 (Cldn17) of Mus musculus (Mouse).